A 222-amino-acid polypeptide reads, in one-letter code: GTP cyclohydrolase 1 (222 aa).

Zn(2+)-binding residues include Cys-111, His-114, and Cys-182.

This sequence belongs to the GTP cyclohydrolase I family. Homomer.

It carries out the reaction GTP + H2O = 7,8-dihydroneopterin 3'-triphosphate + formate + H(+). The protein operates within cofactor biosynthesis; 7,8-dihydroneopterin triphosphate biosynthesis; 7,8-dihydroneopterin triphosphate from GTP: step 1/1. The protein is GTP cyclohydrolase 1 of Salmonella gallinarum (strain 287/91 / NCTC 13346).